Here is an 87-residue protein sequence, read N- to C-terminus: UPF0386 protein RSKD131_0371 (87 aa).

Belongs to the UPF0386 family.

This is UPF0386 protein RSKD131_0371 from Cereibacter sphaeroides (strain KD131 / KCTC 12085) (Rhodobacter sphaeroides).